Reading from the N-terminus, the 209-residue chain is Ubiquitin-conjugating enzyme E2 S (209 aa).

The 147-residue stretch at 14-160 (QTIRQVMREL…ARMMTEIHAQ (147 aa)) folds into the UBC core domain. The active-site Glycyl thioester intermediate is C98. The tract at residues 165-194 (GVGAASDAKDDDGPSTKKHAGLDKKLQDKK) is disordered. Over residues 171–194 (DAKDDDGPSTKKHAGLDKKLQDKK) the composition is skewed to basic and acidic residues.

The protein belongs to the ubiquitin-conjugating enzyme family.

It catalyses the reaction S-ubiquitinyl-[E1 ubiquitin-activating enzyme]-L-cysteine + [E2 ubiquitin-conjugating enzyme]-L-cysteine = [E1 ubiquitin-activating enzyme]-L-cysteine + S-ubiquitinyl-[E2 ubiquitin-conjugating enzyme]-L-cysteine.. Its pathway is protein modification; protein ubiquitination. Functionally, catalyzes the covalent attachment of ubiquitin to other proteins. Acts as an essential factor of the anaphase promoting complex/cyclosome (APC/C), a cell cycle-regulated ubiquitin ligase that controls progression through mitosis. Acts by specifically elongating polyubiquitin chains initiated by the E2 enzyme vih/UbcH10 on APC/C substrates, enhancing the degradation of APC/C substrates by the proteasome and promoting mitotic exit. The protein is Ubiquitin-conjugating enzyme E2 S of Drosophila persimilis (Fruit fly).